We begin with the raw amino-acid sequence, 528 residues long: GMP synthase [glutamine-hydrolyzing] (528 aa).

The 192-residue stretch at 13–204 folds into the Glutamine amidotransferase type-1 domain; that stretch reads AIVILDFGSQ…VYHVCGCDPD (192 aa). Cys-90 acts as the Nucleophile in catalysis. Residues His-178 and Glu-180 contribute to the active site. One can recognise a GMPS ATP-PPase domain in the interval 205–403; the sequence is WTTAAFIDEA…LGLPEEIVRR (199 aa). 232–238 serves as a coordination point for ATP; that stretch reads SGGVDSS.

Homodimer.

The catalysed reaction is XMP + L-glutamine + ATP + H2O = GMP + L-glutamate + AMP + diphosphate + 2 H(+). It functions in the pathway purine metabolism; GMP biosynthesis; GMP from XMP (L-Gln route): step 1/1. Functionally, catalyzes the synthesis of GMP from XMP. The polypeptide is GMP synthase [glutamine-hydrolyzing] (Synechococcus sp. (strain CC9605)).